Reading from the N-terminus, the 264-residue chain is Acyl-[acyl-carrier-protein]--UDP-N-acetylglucosamine O-acyltransferase (264 aa).

This sequence belongs to the transferase hexapeptide repeat family. LpxA subfamily. Homotrimer.

The protein resides in the cytoplasm. It carries out the reaction a (3R)-hydroxyacyl-[ACP] + UDP-N-acetyl-alpha-D-glucosamine = a UDP-3-O-[(3R)-3-hydroxyacyl]-N-acetyl-alpha-D-glucosamine + holo-[ACP]. Its pathway is glycolipid biosynthesis; lipid IV(A) biosynthesis; lipid IV(A) from (3R)-3-hydroxytetradecanoyl-[acyl-carrier-protein] and UDP-N-acetyl-alpha-D-glucosamine: step 1/6. Its function is as follows. Involved in the biosynthesis of lipid A, a phosphorylated glycolipid that anchors the lipopolysaccharide to the outer membrane of the cell. This is Acyl-[acyl-carrier-protein]--UDP-N-acetylglucosamine O-acyltransferase from Albidiferax ferrireducens (strain ATCC BAA-621 / DSM 15236 / T118) (Rhodoferax ferrireducens).